Reading from the N-terminus, the 227-residue chain is Ribonuclease 3 (227 aa).

Positions F4–N133 constitute an RNase III domain. E46 is a Mg(2+) binding site. Residue D50 is part of the active site. Residues N119 and E122 each coordinate Mg(2+). Residue E122 is part of the active site. Residues D158–N226 enclose the DRBM domain.

The protein belongs to the ribonuclease III family. As to quaternary structure, homodimer. Requires Mg(2+) as cofactor.

Its subcellular location is the cytoplasm. It carries out the reaction Endonucleolytic cleavage to 5'-phosphomonoester.. Its function is as follows. Digests double-stranded RNA. Involved in the processing of primary rRNA transcript to yield the immediate precursors to the large and small rRNAs (23S and 16S). Processes some mRNAs, and tRNAs when they are encoded in the rRNA operon. Processes pre-crRNA and tracrRNA of type II CRISPR loci if present in the organism. In Rickettsia typhi (strain ATCC VR-144 / Wilmington), this protein is Ribonuclease 3.